The following is a 110-amino-acid chain: Small ribosomal subunit protein bS6 (110 aa).

This sequence belongs to the bacterial ribosomal protein bS6 family.

In terms of biological role, binds together with bS18 to 16S ribosomal RNA. The polypeptide is Small ribosomal subunit protein bS6 (rpsF) (Aquifex aeolicus (strain VF5)).